The chain runs to 142 residues: Large ribosomal subunit protein uL13 (142 aa).

Belongs to the universal ribosomal protein uL13 family. As to quaternary structure, part of the 50S ribosomal subunit.

This protein is one of the early assembly proteins of the 50S ribosomal subunit, although it is not seen to bind rRNA by itself. It is important during the early stages of 50S assembly. In Polaromonas sp. (strain JS666 / ATCC BAA-500), this protein is Large ribosomal subunit protein uL13.